We begin with the raw amino-acid sequence, 118 residues long: Large ribosomal subunit protein bL17 (118 aa).

This sequence belongs to the bacterial ribosomal protein bL17 family. As to quaternary structure, part of the 50S ribosomal subunit. Contacts protein L32.

The polypeptide is Large ribosomal subunit protein bL17 (Campylobacter hominis (strain ATCC BAA-381 / DSM 21671 / CCUG 45161 / LMG 19568 / NCTC 13146 / CH001A)).